We begin with the raw amino-acid sequence, 366 residues long: Holliday junction branch migration complex subunit RuvB (366 aa).

The large ATPase domain (RuvB-L) stretch occupies residues A3–Y183. Residues L22, R23, G64, K67, T68, S69, E130–F132, R173, Y183, and R220 each bind ATP. A Mg(2+)-binding site is contributed by T68. The small ATPAse domain (RuvB-S) stretch occupies residues A184 to D254. Residues G257–G366 form a head domain (RuvB-H) region. DNA contacts are provided by R312 and R317.

It belongs to the RuvB family. As to quaternary structure, homohexamer. Forms an RuvA(8)-RuvB(12)-Holliday junction (HJ) complex. HJ DNA is sandwiched between 2 RuvA tetramers; dsDNA enters through RuvA and exits via RuvB. An RuvB hexamer assembles on each DNA strand where it exits the tetramer. Each RuvB hexamer is contacted by two RuvA subunits (via domain III) on 2 adjacent RuvB subunits; this complex drives branch migration. In the full resolvosome a probable DNA-RuvA(4)-RuvB(12)-RuvC(2) complex forms which resolves the HJ.

It is found in the cytoplasm. It carries out the reaction ATP + H2O = ADP + phosphate + H(+). Functionally, the RuvA-RuvB-RuvC complex processes Holliday junction (HJ) DNA during genetic recombination and DNA repair, while the RuvA-RuvB complex plays an important role in the rescue of blocked DNA replication forks via replication fork reversal (RFR). RuvA specifically binds to HJ cruciform DNA, conferring on it an open structure. The RuvB hexamer acts as an ATP-dependent pump, pulling dsDNA into and through the RuvAB complex. RuvB forms 2 homohexamers on either side of HJ DNA bound by 1 or 2 RuvA tetramers; 4 subunits per hexamer contact DNA at a time. Coordinated motions by a converter formed by DNA-disengaged RuvB subunits stimulates ATP hydrolysis and nucleotide exchange. Immobilization of the converter enables RuvB to convert the ATP-contained energy into a lever motion, pulling 2 nucleotides of DNA out of the RuvA tetramer per ATP hydrolyzed, thus driving DNA branch migration. The RuvB motors rotate together with the DNA substrate, which together with the progressing nucleotide cycle form the mechanistic basis for DNA recombination by continuous HJ branch migration. Branch migration allows RuvC to scan DNA until it finds its consensus sequence, where it cleaves and resolves cruciform DNA. This Frankia alni (strain DSM 45986 / CECT 9034 / ACN14a) protein is Holliday junction branch migration complex subunit RuvB.